Consider the following 354-residue polypeptide: Serum paraoxonase/lactonase 3 (354 aa).

Cysteines 42 and 352 form a disulfide. N-linked (GlcNAc...) asparagine glycosylation occurs at N50. The Ca(2+) site is built by E53 and D54. Catalysis depends on H114, which acts as the Proton acceptor. I116 lines the Ca(2+) pocket. S165 bears the Phosphoserine mark. Residues N167, N168, N223, D268, and N269 each coordinate Ca(2+). N-linked (GlcNAc...) asparagine glycosylation is present at N269.

The protein belongs to the paraoxonase family. Homodimer. Ca(2+) serves as cofactor. Post-translationally, glycosylated. In terms of processing, the signal sequence is not cleaved.

The protein resides in the secreted. It localises to the extracellular space. The enzyme catalyses a phenyl acetate + H2O = a phenol + acetate + H(+). It catalyses the reaction An aryl dialkyl phosphate + H2O = dialkyl phosphate + an aryl alcohol.. It carries out the reaction an N-acyl-L-homoserine lactone + H2O = an N-acyl-L-homoserine + H(+). Functionally, has low activity towards the organophosphate paraxon and aromatic carboxylic acid esters. Rapidly hydrolyzes lactones such as statin prodrugs (e.g. lovastatin). Hydrolyzes aromatic lactones and 5- or 6-member ring lactones with aliphatic substituents but not simple lactones or those with polar substituents. This is Serum paraoxonase/lactonase 3 (PON3) from Oryctolagus cuniculus (Rabbit).